The primary structure comprises 369 residues: MKRSGVGSLFAGAHIAEAVPLAPLTTLRVGPIARRVITCTSAEQVVAALRHLDSAAKTGADRPLVFAGGSNLVIAENLTDLTVVRLANSGITIDGNLVRAEAGAVFDDVVVRAIEQGLGGLECLSGIPGSAGATPVQNVGAYGAEVSDTITRVRLLDRCTGEVRWVSARDLRFGYRTSVLKHADGLAVPTVVLEVEFALDPSGRSAPLRYGELIAALNATSGERADPQAVREAVLALRARKGMVLDPTDHDTWSVGSFFTNPVVTQDVYERLAGDAATRKDGPVPHYPAPDGVKLAAGWLVERAGFGKGYPDAGAAPCRLSTKHALALTNRGGATAEDVVTLARAVRDGVHDVFGITLKPEPVLIGCML.

The region spanning 29-202 (VGPIARRVIT…LEVEFALDPS (174 aa)) is the FAD-binding PCMH-type domain. Arg-176 is an active-site residue. Ser-257 functions as the Proton donor in the catalytic mechanism. The active site involves Glu-361.

It belongs to the MurB family. FAD is required as a cofactor.

It localises to the cytoplasm. It carries out the reaction UDP-N-acetyl-alpha-D-muramate + NADP(+) = UDP-N-acetyl-3-O-(1-carboxyvinyl)-alpha-D-glucosamine + NADPH + H(+). It functions in the pathway cell wall biogenesis; peptidoglycan biosynthesis. Cell wall formation. The chain is UDP-N-acetylenolpyruvoylglucosamine reductase from Mycobacterium tuberculosis (strain ATCC 25177 / H37Ra).